Reading from the N-terminus, the 360-residue chain is 3-dehydroquinate synthase (360 aa).

NAD(+) is bound by residues 69 to 74 (DGEAYK), 103 to 107 (GVIGD), 127 to 128 (TT), Lys-140, Lys-149, and 167 to 170 (CLQT). Residues Glu-182, His-245, and His-262 each coordinate Zn(2+).

The protein belongs to the sugar phosphate cyclases superfamily. Dehydroquinate synthase family. Co(2+) serves as cofactor. The cofactor is Zn(2+). It depends on NAD(+) as a cofactor.

The protein resides in the cytoplasm. The enzyme catalyses 7-phospho-2-dehydro-3-deoxy-D-arabino-heptonate = 3-dehydroquinate + phosphate. It participates in metabolic intermediate biosynthesis; chorismate biosynthesis; chorismate from D-erythrose 4-phosphate and phosphoenolpyruvate: step 2/7. Functionally, catalyzes the conversion of 3-deoxy-D-arabino-heptulosonate 7-phosphate (DAHP) to dehydroquinate (DHQ). The polypeptide is 3-dehydroquinate synthase (Aeromonas hydrophila subsp. hydrophila (strain ATCC 7966 / DSM 30187 / BCRC 13018 / CCUG 14551 / JCM 1027 / KCTC 2358 / NCIMB 9240 / NCTC 8049)).